Here is a 276-residue protein sequence, read N- to C-terminus: Probable ribose-5-phosphate isomerase 3, chloroplastic (276 aa).

Residues 1–39 constitute a chloroplast transit peptide; sequence MASLSFVSSSHLTLRTPSIALRSTGSSPRTSVSFSVKAQ. The residue at position 40 (S40) is an N-acetylserine. The residue at position 108 (S108) is a Phosphoserine.

Belongs to the ribose 5-phosphate isomerase family. Phosphorylated by SRK2C.

It is found in the plastid. The protein resides in the chloroplast. It carries out the reaction aldehydo-D-ribose 5-phosphate = D-ribulose 5-phosphate. It functions in the pathway carbohydrate degradation; pentose phosphate pathway; D-ribose 5-phosphate from D-ribulose 5-phosphate (non-oxidative stage): step 1/1. In terms of biological role, catalyzes the reversible conversion of ribose-5-phosphate to ribulose 5-phosphate. This chain is Probable ribose-5-phosphate isomerase 3, chloroplastic (RPI3), found in Arabidopsis thaliana (Mouse-ear cress).